We begin with the raw amino-acid sequence, 260 residues long: Homeobox protein CDX-1 (260 aa).

Positions Lys149–Asn208 form a DNA-binding region, homeobox. The interval Tyr152–Tyr173 is interaction with DNA. The interaction with 5-mCpG DNA stretch occupies residues Arg191 to Ala202. Positions Glu204 to Pro260 are disordered. Composition is skewed to low complexity over residues Gln213 to Thr223 and Ser240 to Leu252.

The protein belongs to the Caudal homeobox family.

The protein localises to the nucleus. Functionally, plays a role in transcriptional regulation. Involved in activated KRAS-mediated transcriptional activation of PRKD1. Binds to the PRKD1 promoter. Could play a role in the terminal differentiation of the intestine. Binds preferentially to methylated DNA. The protein is Homeobox protein CDX-1 (CDX1) of Gallus gallus (Chicken).